Here is a 622-residue protein sequence, read N- to C-terminus: MSTENKQSLPAITLAAIGVVYGDIGTSPLYTLRECLSGQFGFGVERDAVFGFLSLIFWLLIFVVSIKYLTFVMRADNAGEGGILTLMSLAGRNTSARTTSMLVIMGLIGGSFFYGEVVITPAISVMSAIEGLEIVAPQLDTWIVPLSIIVLTLLFMIQKHGTAMVGKLFAPIMLTWFLILAGLGLRSIIANPEVLHALNPMWAVHFFLEYKTVSFIALGAVVLSITGVEALYADMGHFGKFPIRLAWFTVVLPSLTLNYFGQGALLLKNPEAIKNPFFLLAPDWALIPLLIIAALATVIASQAVISGVFSLTRQAVRLGYLSPMRIIHTSEMESGQIYIPFVNWMLYVAVVIVIVSFEHSSNLAAAYGIAVTGTMVLTSILSTTVARQNWHWNKYFVALILIAFLCVDIPLFTANLDKLLSGGWLPLSLGTVMFIVMTTWKSERFRLLRRMHEHGNSLEAMIASLEKSPPVRVPGTAVYMSRAINVIPFALMHNLKHNKVLHERVILLTLRTEDAPYVHNVRRVQIEQLSPTFWRVVASYGWRETPNVEEVFHRCGLEGLSCRMMETSFFMSHESLILGKRPWYLRLRGKLYLLLQRNALRAPDQFEIPPNRVIELGTQVEI.

Transmembrane regions (helical) follow at residues 9-29 (LPAITLAAIGVVYGDIGTSPL), 49-69 (VFGFLSLIFWLLIFVVSIKYL), 103-123 (VIMGLIGGSFFYGEVVITPAI), 137-157 (PQLDTWIVPLSIIVLTLLFMI), 165-185 (VGKLFAPIMLTWFLILAGLGL), 213-233 (VSFIALGAVVLSITGVEALYA), 247-267 (WFTVVLPSLTLNYFGQGALLL), 276-296 (PFFLLAPDWALIPLLIIAALA), 337-357 (IYIPFVNWMLYVAVVIVIVSF), 363-383 (LAAAYGIAVTGTMVLTSILST), 396-416 (FVALILIAFLCVDIPLFTANL), and 419-439 (LLSGGWLPLSLGTVMFIVMTT).

Belongs to the HAK/KUP transporter (TC 2.A.72) family.

The protein resides in the cell inner membrane. The enzyme catalyses K(+)(in) + H(+)(in) = K(+)(out) + H(+)(out). Its function is as follows. Responsible for the low-affinity transport of potassium into the cell. Likely operates as a K(+):H(+) symporter. The sequence is that of Low affinity potassium transport system protein Kup from Escherichia fergusonii (strain ATCC 35469 / DSM 13698 / CCUG 18766 / IAM 14443 / JCM 21226 / LMG 7866 / NBRC 102419 / NCTC 12128 / CDC 0568-73).